Consider the following 119-residue polypeptide: Large ribosomal subunit protein bL19 (119 aa).

This sequence belongs to the bacterial ribosomal protein bL19 family.

Functionally, this protein is located at the 30S-50S ribosomal subunit interface and may play a role in the structure and function of the aminoacyl-tRNA binding site. The polypeptide is Large ribosomal subunit protein bL19 (Pelobacter propionicus (strain DSM 2379 / NBRC 103807 / OttBd1)).